The chain runs to 688 residues: DNA-directed RNA polymerase subunit beta' (688 aa).

Positions 69, 71, 87, and 90 each coordinate Zn(2+). Mg(2+)-binding residues include Asp-489, Asp-491, and Asp-493.

This sequence belongs to the RNA polymerase beta' chain family. RpoC1 subfamily. In plastids the minimal PEP RNA polymerase catalytic core is composed of four subunits: alpha, beta, beta', and beta''. When a (nuclear-encoded) sigma factor is associated with the core the holoenzyme is formed, which can initiate transcription. Mg(2+) serves as cofactor. The cofactor is Zn(2+).

It localises to the plastid. The protein resides in the chloroplast. The enzyme catalyses RNA(n) + a ribonucleoside 5'-triphosphate = RNA(n+1) + diphosphate. In terms of biological role, DNA-dependent RNA polymerase catalyzes the transcription of DNA into RNA using the four ribonucleoside triphosphates as substrates. The polypeptide is DNA-directed RNA polymerase subunit beta' (Piper cenocladum (Ant piper)).